Consider the following 778-residue polypeptide: Probable protein kinase DDB_G0291133 (778 aa).

Residues 129-162 (LSINNNNNNNNNNGGYKIPSSVNKNSNNYNSNSN) are disordered. The 286-residue stretch at 177–462 (FDVVCKLGSG…LDQILLNENI (286 aa)) folds into the Protein kinase domain. Residues 183–191 (LGSGSFSDV) and lysine 206 contribute to the ATP site. Aspartate 303 acts as the Proton acceptor in catalysis. Positions 308 and 321 each coordinate Mg(2+). 3 disordered regions span residues 478–509 (NIEN…DDNN), 562–697 (HFVR…GFYG), and 757–778 (SHPQ…QETN). Positions 578 to 590 (SDEEEDDDDDDDS) are enriched in acidic residues. Over residues 599–651 (SLNNLNNSSSNIGISESNSNNSFSSILEENNESSSSSPLPSLSFSRRLSTSSL) the composition is skewed to low complexity. The segment covering 652-670 (VTTISPKPNFNTSGNKLFS) has biased composition (polar residues). The span at 671–693 (NENNNSNNNNNNNNNNQNNNNNN) shows a compositional bias: low complexity. Residues 757–766 (SHPQESDKMS) show a composition bias toward basic and acidic residues.

Belongs to the protein kinase superfamily. Ser/Thr protein kinase family. WEE1 subfamily.

The enzyme catalyses L-seryl-[protein] + ATP = O-phospho-L-seryl-[protein] + ADP + H(+). It catalyses the reaction L-threonyl-[protein] + ATP = O-phospho-L-threonyl-[protein] + ADP + H(+). This is Probable protein kinase DDB_G0291133 from Dictyostelium discoideum (Social amoeba).